The chain runs to 284 residues: NAD kinase (284 aa).

Catalysis depends on Asp-67, which acts as the Proton acceptor. NAD(+) contacts are provided by residues 67-68 (DG), 141-142 (ND), Arg-152, Lys-169, Asp-171, 182-187 (TGYSLS), and Gln-241.

This sequence belongs to the NAD kinase family. A divalent metal cation is required as a cofactor.

Its subcellular location is the cytoplasm. The enzyme catalyses NAD(+) + ATP = ADP + NADP(+) + H(+). Involved in the regulation of the intracellular balance of NAD and NADP, and is a key enzyme in the biosynthesis of NADP. Catalyzes specifically the phosphorylation on 2'-hydroxyl of the adenosine moiety of NAD to yield NADP. This is NAD kinase from Geobacter sulfurreducens (strain ATCC 51573 / DSM 12127 / PCA).